A 43-amino-acid polypeptide reads, in one-letter code: Parvalbumin beta (43 aa).

EF-hand domains lie at lysine 1–phenylalanine 20 and leucine 22–lysine 43. Positions 7, 9, 11, 12, 14, 16, and 37 each coordinate Ca(2+).

Detected in muscle and cutaneous mucus. In the skin, detected in cells in the basal region of the glandular epithelium of the dermal mucus glands (at protein level).

The protein localises to the cytoplasm. It localises to the secreted. Its function is as follows. In muscle, parvalbumin is thought to be involved in relaxation after contraction. It binds two calcium ions. The sequence is that of Parvalbumin beta from Rana temporaria (European common frog).